Consider the following 112-residue polypeptide: Inner membrane assembly complex subunit 17 (112 aa).

The transit peptide at 1–24 (MLRKLPINFAKWTVKKVPVQQKRF) directs the protein to the mitochondrion. Residues 25–44 (NSQQKEISPHIMFYKNYARP) are Mitochondrial matrix-facing. A helical transmembrane segment spans residues 45 to 62 (LGKVTLFALATYYGLEIV). The Mitochondrial intermembrane portion of the chain corresponds to 63–112 (WWKLDASEQEAIKNSKLLICESSFSLLTFRRITEFRECEIKTRDLYDPEI).

This sequence belongs to the INA17 family. As to quaternary structure, component of the inner membrane assembly (INA) complex. Interacts with a subset of F(1)F(0)-ATP synthase subunits of the F(1)-domain and the peripheral stalk.

It localises to the mitochondrion inner membrane. Functionally, component of the INA complex (INAC) that promotes the biogenesis of mitochondrial F(1)F(0)-ATP synthase. INAC facilitates the assembly of the peripheral stalk and promotes the assembly of the catalytic F(1)-domain with the membrane-embedded F(0)-domain. The chain is Inner membrane assembly complex subunit 17 from Schizosaccharomyces pombe (strain 972 / ATCC 24843) (Fission yeast).